The sequence spans 393 residues: Formate-dependent phosphoribosylglycinamide formyltransferase (393 aa).

Residues 22-23 (EL) and Glu82 each bind N(1)-(5-phospho-beta-D-ribosyl)glycinamide. ATP is bound by residues Arg114, Lys155, 160–165 (SSGKGQ), 195–198 (EGFI), and Glu203. The 190-residue stretch at 119–308 (RLAAEELDLP…QFALHARAIL (190 aa)) folds into the ATP-grasp domain. Residues Glu267 and Glu279 each coordinate Mg(2+). Residues Asp286, Lys356, and 363 to 364 (RR) contribute to the N(1)-(5-phospho-beta-D-ribosyl)glycinamide site.

This sequence belongs to the PurK/PurT family. In terms of assembly, homodimer.

It catalyses the reaction N(1)-(5-phospho-beta-D-ribosyl)glycinamide + formate + ATP = N(2)-formyl-N(1)-(5-phospho-beta-D-ribosyl)glycinamide + ADP + phosphate + H(+). It functions in the pathway purine metabolism; IMP biosynthesis via de novo pathway; N(2)-formyl-N(1)-(5-phospho-D-ribosyl)glycinamide from N(1)-(5-phospho-D-ribosyl)glycinamide (formate route): step 1/1. Involved in the de novo purine biosynthesis. Catalyzes the transfer of formate to 5-phospho-ribosyl-glycinamide (GAR), producing 5-phospho-ribosyl-N-formylglycinamide (FGAR). Formate is provided by PurU via hydrolysis of 10-formyl-tetrahydrofolate. This is Formate-dependent phosphoribosylglycinamide formyltransferase from Pseudomonas fluorescens (strain ATCC BAA-477 / NRRL B-23932 / Pf-5).